The chain runs to 1880 residues: Nonribosomal peptide synthetase otaB (1880 aa).

The interval 205-594 is adenylation 1; that stretch reads AQAVERGNSI…SVSFVGRRQA (390 aa). One can recognise a Carrier domain in the interval 728–804; it reads LPLSPLERQI…ELGAHLEQEA (77 aa). Ser-765 is modified (O-(pantetheine 4'-phosphoryl)serine). The interval 840-1250 is condensation; the sequence is EDVYPCTALQ…LLSPQDQQQL (411 aa). The segment at 1269–1665 is adenylation 2; it reads QRQCLAHPQK…GRKDRQVKLR (397 aa).

The protein belongs to the NRP synthetase family.

The enzyme catalyses 7-carboxymellein + L-phenylalanine + ATP = ochratoxin B + ADP + phosphate + H(+). It participates in mycotoxin biosynthesis. Its function is as follows. Nonribosomal peptide synthetase; part of the gene cluster that mediates the biosynthesis of ochratoxin A (OTA), a mycotoxin composed of a chlorinated type I polyketide dihydroisocoumarin moiety linked to L-phenylalanine, and demonstrated to have nephrotoxic, immunotoxic, genotoxic, neurotoxic, and teratogenic properties. OtaB is responsible for the linking of phenylalanine to the dihydroisocoumarin ring. The pathway begins with the highly reducing polyketide synthase otaA that catalyzes the formation of the isocoumarin group during the initial stages of biosynthesis, starting from one acetate and 4 malonate units, to originate the characteristic pentaketide skeleton 7-methylmellein (7-MM) of the OTA molecule. The newly identified cyclase otaY might be involved in the polyketide cyclization reaction during the initial steps of the OTA biosynthesis. 7-MM is then oxidized into 7-carboxymellein (also called ochratoxin beta) by the cytochrome P450 monooxygenase otaC. The NRPS encoded by the otaB gene is involved in the linking of phenylalanine to the dihydroisocoumarin ring. The reaction catalyzed by NRPS results in the production of ochratoxin B (OTB), which is the non-chlorinated analog of OTA and which subsequently serves as the substrate of the halogenase otaD for chlorination activity to form the final molecular structure of OTA, containing a chlorine atom in the C-5 position of the molecule. This is Nonribosomal peptide synthetase otaB from Aspergillus niger (strain ATCC MYA-4892 / CBS 513.88 / FGSC A1513).